The sequence spans 420 residues: Serine--tRNA ligase (420 aa).

Position 227 to 229 (227 to 229 (TSE)) interacts with L-serine. ATP-binding positions include 258–260 (RRE) and Val274. Glu281 is an L-serine binding site. 345–348 (ELTS) is a binding site for ATP. Thr380 contacts L-serine.

This sequence belongs to the class-II aminoacyl-tRNA synthetase family. Type-1 seryl-tRNA synthetase subfamily. As to quaternary structure, homodimer. The tRNA molecule binds across the dimer.

Its subcellular location is the cytoplasm. It carries out the reaction tRNA(Ser) + L-serine + ATP = L-seryl-tRNA(Ser) + AMP + diphosphate + H(+). The enzyme catalyses tRNA(Sec) + L-serine + ATP = L-seryl-tRNA(Sec) + AMP + diphosphate + H(+). Its pathway is aminoacyl-tRNA biosynthesis; selenocysteinyl-tRNA(Sec) biosynthesis; L-seryl-tRNA(Sec) from L-serine and tRNA(Sec): step 1/1. Catalyzes the attachment of serine to tRNA(Ser). Is also able to aminoacylate tRNA(Sec) with serine, to form the misacylated tRNA L-seryl-tRNA(Sec), which will be further converted into selenocysteinyl-tRNA(Sec). In Nocardia farcinica (strain IFM 10152), this protein is Serine--tRNA ligase.